A 362-amino-acid polypeptide reads, in one-letter code: Protein RecA (362 aa).

ATP is bound at residue 77-84; it reads GPESSGKT.

It belongs to the RecA family.

Its subcellular location is the cytoplasm. Its function is as follows. Can catalyze the hydrolysis of ATP in the presence of single-stranded DNA, the ATP-dependent uptake of single-stranded DNA by duplex DNA, and the ATP-dependent hybridization of homologous single-stranded DNAs. It interacts with LexA causing its activation and leading to its autocatalytic cleavage. This Nitrobacter winogradskyi (strain ATCC 25391 / DSM 10237 / CIP 104748 / NCIMB 11846 / Nb-255) protein is Protein RecA.